The sequence spans 110 residues: Large ribosomal subunit protein uL22 (110 aa).

This sequence belongs to the universal ribosomal protein uL22 family. Part of the 50S ribosomal subunit.

In terms of biological role, this protein binds specifically to 23S rRNA; its binding is stimulated by other ribosomal proteins, e.g. L4, L17, and L20. It is important during the early stages of 50S assembly. It makes multiple contacts with different domains of the 23S rRNA in the assembled 50S subunit and ribosome. Its function is as follows. The globular domain of the protein is located near the polypeptide exit tunnel on the outside of the subunit, while an extended beta-hairpin is found that lines the wall of the exit tunnel in the center of the 70S ribosome. This Alkaliphilus metalliredigens (strain QYMF) protein is Large ribosomal subunit protein uL22.